Consider the following 103-residue polypeptide: Small ribosomal subunit protein uS10 (103 aa).

Belongs to the universal ribosomal protein uS10 family. Part of the 30S ribosomal subunit.

Functionally, involved in the binding of tRNA to the ribosomes. The protein is Small ribosomal subunit protein uS10 of Acetivibrio thermocellus (strain ATCC 27405 / DSM 1237 / JCM 9322 / NBRC 103400 / NCIMB 10682 / NRRL B-4536 / VPI 7372) (Clostridium thermocellum).